The following is a 212-amino-acid chain: GTP cyclohydrolase 1 (212 aa).

Residues C103, H106, and C174 each contribute to the Zn(2+) site.

This sequence belongs to the GTP cyclohydrolase I family. Toroid-shaped homodecamer, composed of two pentamers of five dimers.

The catalysed reaction is GTP + H2O = 7,8-dihydroneopterin 3'-triphosphate + formate + H(+). It functions in the pathway cofactor biosynthesis; 7,8-dihydroneopterin triphosphate biosynthesis; 7,8-dihydroneopterin triphosphate from GTP: step 1/1. In Caulobacter vibrioides (strain ATCC 19089 / CIP 103742 / CB 15) (Caulobacter crescentus), this protein is GTP cyclohydrolase 1.